A 349-amino-acid polypeptide reads, in one-letter code: Dihydroorotase (349 aa).

The Zn(2+) site is built by histidine 17 and histidine 19. Residues 19–21 (HLR) and asparagine 45 contribute to the substrate site. Residues lysine 105, histidine 142, and histidine 180 each coordinate Zn(2+). Lysine 105 carries the post-translational modification N6-carboxylysine. Histidine 142 is a binding site for substrate. Residue leucine 225 coordinates substrate. Aspartate 253 is a Zn(2+) binding site. The active site involves aspartate 253. Histidine 257 and alanine 269 together coordinate substrate.

This sequence belongs to the metallo-dependent hydrolases superfamily. DHOase family. Class II DHOase subfamily. As to quaternary structure, homodimer. The cofactor is Zn(2+).

The catalysed reaction is (S)-dihydroorotate + H2O = N-carbamoyl-L-aspartate + H(+). The protein operates within pyrimidine metabolism; UMP biosynthesis via de novo pathway; (S)-dihydroorotate from bicarbonate: step 3/3. Its function is as follows. Catalyzes the reversible cyclization of carbamoyl aspartate to dihydroorotate. The sequence is that of Dihydroorotase from Nitrosomonas europaea (strain ATCC 19718 / CIP 103999 / KCTC 2705 / NBRC 14298).